The primary structure comprises 342 residues: Methionyl-tRNA formyltransferase (342 aa).

Position 108–111 (108–111) interacts with (6S)-5,6,7,8-tetrahydrofolate; it reads SLLP.

Belongs to the Fmt family.

The catalysed reaction is L-methionyl-tRNA(fMet) + (6R)-10-formyltetrahydrofolate = N-formyl-L-methionyl-tRNA(fMet) + (6S)-5,6,7,8-tetrahydrofolate + H(+). Functionally, attaches a formyl group to the free amino group of methionyl-tRNA(fMet). The formyl group appears to play a dual role in the initiator identity of N-formylmethionyl-tRNA by promoting its recognition by IF2 and preventing the misappropriation of this tRNA by the elongation apparatus. The polypeptide is Methionyl-tRNA formyltransferase (Prochlorococcus marinus (strain MIT 9313)).